Reading from the N-terminus, the 306-residue chain is Dioxygenase FrzG (306 aa).

The Fe cation site is built by His132, Asp134, and His216.

The protein belongs to the PhyH family. In terms of assembly, homodimer. The cofactor is Fe cation.

The enzyme catalyses (1S,4S)-4-[(4-methoxyphenyl)methyl]-2-methyl-2,5-diazaspiro[bicyclo[3.2.1]octane-6,1'-cyclohexan]-4'-one + 2-oxoglutarate + O2 = (2S)-3-(4-methoxyphenyl)-2-[(3S)-3-(methylamino)-8-oxo-1-azaspiro[4.5]decan-1-yl]propanal + succinate + CO2. It participates in secondary metabolite biosynthesis. Its function is as follows. Dioxygenase; part of the gene cluster that mediates the biosynthesis of the alkaloid (-)-FR901483, a potent immunosuppressant that shows efficacy in animal models and a probable inhibitor of purine nucleotide biosynthesis by targeting phosphoribosylpyrophosphate amidotransferase (PPAT). Within the pathway, FrzG cleaves the C9-N10' bond to yield a conjugated iminium. FrzG is also able to catalyze the dehydrogenation between C7 and C8 which leads to a shunt product. The biosynthesis of (-)-FR901483 starts with the condensation of two L-tyrosines to yield (S,S)-dityrosyl-piperazine. This process occurs in 3 steps with the non-canonical nonribosomal peptide synthetase FrzA catalyzing the reduction of L-tyrosine into L-tyrosinal, the spontaneous condensation of 2 L-tyrosinal units, and the subsequent reduction by the NmrA-like family domain-containing oxidoreductase FrzB. The cytochrome P450 monooxygenase FrzC then performs coupling between N10 and C1' to morph the piperazine into a 1,4-diazabicyclo[3.2.1]octane spiro-fused to a 2,5-cyclohexadienone. The dienone portion is further reduced to cyclohexanone by the flavin-dependent reductase FrzD. The methyltranserases (MTs) FrzE and FrzF are then involved in the methylation at the C10' amine and the C4 phenolic oxygen, respectively. The order of the two MTs appear to be interchangeable. Cleavage of the C9-N10' bond by the dioxygenase FrzG then leads to formation of a conjugated iminium. In addition to the oxidation of C9, an additional dehydrogenation between C7 and C8 can occur to give a likely shunt product. The next biosynthetic step is the intramolecular aldol condensation catalyzed by the newly identified aldolase FrzH to yield an aza-tricyclic product with the formation of a C9-C3' bond. The short-chain dehydrogenase/reductase FrzI then produces dephospho-(-)-FR901483 that is phosphorylated at C4'-OH into (-)-FR901483 by the phosphotransferase FrzJ. This Cladobotryum sp protein is Dioxygenase FrzG.